The following is a 343-amino-acid chain: SET and MYND domain-containing protein DDB_G0292454 (343 aa).

Residues E77 to T307 form the SET domain. C93, C96, C111, C114, C120, C124, H133, and C137 together coordinate Zn(2+). The MYND-type zinc-finger motif lies at C93–C137.

It belongs to the class V-like SAM-binding methyltransferase superfamily.

Probable methyltransferase. This Dictyostelium discoideum (Social amoeba) protein is SET and MYND domain-containing protein DDB_G0292454.